Consider the following 318-residue polypeptide: Mitochondrial thiamine pyrophosphate carrier 1 (318 aa).

The next 6 membrane-spanning stretches (helical) occupy residues 12 to 28 (GTRR…GLVS), 91 to 107 (LMYV…YRTT), 125 to 141 (SFVA…ASTY), 181 to 197 (GCSA…GLFF), 221 to 237 (AAGV…VFPL), and 284 to 301 (GLTV…VTMW). 3 Solcar repeats span residues 12–110 (GTRR…TTQA), 120–206 (PPPA…LRPV), and 214–309 (PFGS…SLHY).

Belongs to the mitochondrial carrier (TC 2.A.29) family.

It localises to the mitochondrion inner membrane. In terms of biological role, mitochondrial transporter that mediates uptake of thiamine pyrophosphate (ThPP) into mitochondria. The protein is Mitochondrial thiamine pyrophosphate carrier 1 (tpc1) of Aspergillus oryzae (strain ATCC 42149 / RIB 40) (Yellow koji mold).